The chain runs to 357 residues: Probable cinnamyl alcohol dehydrogenase (357 aa).

Position 47 (cysteine 47) interacts with Zn(2+). Residue serine 49 coordinates NADP(+). Residues histidine 69, glutamate 70, cysteine 100, cysteine 103, cysteine 106, cysteine 114, and cysteine 163 each contribute to the Zn(2+) site. NADP(+) contacts are provided by residues threonine 167, glycine 188 to glycine 193, serine 211 to lysine 216, threonine 251, glycine 275, and serine 298 to isoleucine 300.

Belongs to the zinc-containing alcohol dehydrogenase family. As to quaternary structure, homodimer. It depends on Zn(2+) as a cofactor.

It carries out the reaction (E)-cinnamyl alcohol + NADP(+) = (E)-cinnamaldehyde + NADPH + H(+). It catalyses the reaction (E)-coniferol + NADP(+) = (E)-coniferaldehyde + NADPH + H(+). The catalysed reaction is (E)-sinapyl alcohol + NADP(+) = (E)-sinapaldehyde + NADPH + H(+). The enzyme catalyses (E)-4-coumaroyl alcohol + NADP(+) = (E)-4-coumaraldehyde + NADPH + H(+). It carries out the reaction (E)-caffeyl alcohol + NADP(+) = (E)-caffeyl aldehyde + NADPH + H(+). It participates in aromatic compound metabolism; phenylpropanoid biosynthesis. Functionally, involved in lignin biosynthesis. Catalyzes the final step specific for the production of lignin monomers. Catalyzes the NADPH-dependent reduction of coniferaldehyde, 5-hydroxyconiferaldehyde, sinapaldehyde, 4-coumaraldehyde and caffeyl aldehyde to their respective alcohols. The chain is Probable cinnamyl alcohol dehydrogenase (CAD) from Pinus radiata (Monterey pine).